A 493-amino-acid chain; its full sequence is Lysine--tRNA ligase (493 aa).

Glu-402 and Glu-409 together coordinate Mg(2+).

The protein belongs to the class-II aminoacyl-tRNA synthetase family. As to quaternary structure, homodimer. The cofactor is Mg(2+).

The protein localises to the cytoplasm. The catalysed reaction is tRNA(Lys) + L-lysine + ATP = L-lysyl-tRNA(Lys) + AMP + diphosphate. The protein is Lysine--tRNA ligase of Ureaplasma parvum serovar 3 (strain ATCC 27815 / 27 / NCTC 11736).